A 349-amino-acid polypeptide reads, in one-letter code: Desmethyl-yatein O-methyltransferase (349 aa).

6 residues coordinate S-adenosyl-L-homocysteine: Gly-193, Asp-216, Asp-236, Met-237, Met-249, and Lys-250. The active-site Proton acceptor is His-254. Catalysis depends on residues Glu-282 and Glu-314.

It belongs to the class I-like SAM-binding methyltransferase superfamily. Cation-independent O-methyltransferase family. COMT subfamily. As to quaternary structure, homodimer. Mostly expressed in stems, and, to a lower extent, in leaves.

It carries out the reaction (-)-5'-demethylyatein + S-adenosyl-L-methionine = (-)-yatein + S-adenosyl-L-homocysteine + H(+). It participates in aromatic compound metabolism; phenylpropanoid biosynthesis. Functionally, O-methyltransferase involved in the biosynthesis of etoposide, a chemotherapeutic compound of the topoisomerase inhibitor family. Catalyzes the methylation of (-)-5'-demethylyatein to produce (-)-yatein. In Sinopodophyllum hexandrum (Himalayan may apple), this protein is Desmethyl-yatein O-methyltransferase.